We begin with the raw amino-acid sequence, 120 residues long: Aspartate 1-decarboxylase (120 aa).

Ser25 serves as the catalytic Schiff-base intermediate with substrate; via pyruvic acid. A Pyruvic acid (Ser) modification is found at Ser25. Thr57 contacts substrate. Tyr58 acts as the Proton donor in catalysis. Residue 73-75 (GAA) coordinates substrate.

The protein belongs to the PanD family. As to quaternary structure, heterooctamer of four alpha and four beta subunits. Pyruvate serves as cofactor. Post-translationally, is synthesized initially as an inactive proenzyme, which is activated by self-cleavage at a specific serine bond to produce a beta-subunit with a hydroxyl group at its C-terminus and an alpha-subunit with a pyruvoyl group at its N-terminus.

It is found in the cytoplasm. It carries out the reaction L-aspartate + H(+) = beta-alanine + CO2. It functions in the pathway cofactor biosynthesis; (R)-pantothenate biosynthesis; beta-alanine from L-aspartate: step 1/1. Its function is as follows. Catalyzes the pyruvoyl-dependent decarboxylation of aspartate to produce beta-alanine. In Methylibium petroleiphilum (strain ATCC BAA-1232 / LMG 22953 / PM1), this protein is Aspartate 1-decarboxylase.